A 770-amino-acid polypeptide reads, in one-letter code: Transcription activator AMTR1 (770 aa).

Residues 7–34 (CLTCRQRKLKCDEKKPVCRQCAKASREC) constitute a DNA-binding region (zn(2)-C6 fungal-type).

Its subcellular location is the nucleus. Its function is as follows. Transcription factor that regulates the expression of the gene clusters that mediate the biosynthesis of AM-toxins, host-selective toxins (HSTs) causing Alternaria blotch on apple, a worldwide distributed disease. AM-toxins have two target sites for affecting susceptible apple cells; they cause invagination of the plasma membrane and electrolyte loss and chloroplast disorganization. This chain is Transcription activator AMTR1, found in Alternaria alternata (Alternaria rot fungus).